We begin with the raw amino-acid sequence, 387 residues long: Sialic acid-binding Ig-like lectin 13 (387 aa).

The first 15 residues, 1–15 (MLPLLLPLLWAGALA), serve as a signal peptide directing secretion. One can recognise an Ig-like V-type domain in the interval 16-138 (LEGIFQLEVP…KDPPLSVHVT (123 aa)). At 16 to 341 (LEGIFQLEVP…QRKSGPMAEV (326 aa)) the chain is on the extracellular side. 3 disulfide bridges follow: C35–C168, C40–C100, and C162–C211. N-linked (GlcNAc...) asparagine glycosylation is present at N99. R118 provides a ligand contact to N-acetylneuraminate. Residues 144–227 (PDILIPGALK…AGVTTTRTVR (84 aa)) enclose the Ig-like C2-type 1 domain. Residues N229, N236, and N254 are each glycosylated (N-linked (GlcNAc...) asparagine). The Ig-like C2-type 2 domain maps to 234–326 (PQNLTLTVFQ…RNPLGSQQVS (93 aa)). C270 and C314 are oxidised to a cystine. A helical membrane pass occupies residues 342–362 (VLVAIGEAAVKILLLFLCLII). Over 363-387 (LRVKSHRRKAAKAATGVEAAKVVKG) the chain is Cytoplasmic.

This sequence belongs to the immunoglobulin superfamily. SIGLEC (sialic acid binding Ig-like lectin) family.

It localises to the membrane. Its function is as follows. Putative adhesion molecule that mediates sialic-acid dependent binding to cells. The polypeptide is Sialic acid-binding Ig-like lectin 13 (SIGLEC13) (Pan troglodytes (Chimpanzee)).